A 72-amino-acid polypeptide reads, in one-letter code: MAKEESIKMNGTVIETLPNTMFRVELENGHVVTAHISGKMRKHYIRILTGDKVTVELTPYDLSKGRITYRAR.

One can recognise an S1-like domain in the interval methionine 1 to arginine 72.

It belongs to the IF-1 family. As to quaternary structure, component of the 30S ribosomal translation pre-initiation complex which assembles on the 30S ribosome in the order IF-2 and IF-3, IF-1 and N-formylmethionyl-tRNA(fMet); mRNA recruitment can occur at any time during PIC assembly.

It is found in the cytoplasm. Functionally, one of the essential components for the initiation of protein synthesis. Stabilizes the binding of IF-2 and IF-3 on the 30S subunit to which N-formylmethionyl-tRNA(fMet) subsequently binds. Helps modulate mRNA selection, yielding the 30S pre-initiation complex (PIC). Upon addition of the 50S ribosomal subunit IF-1, IF-2 and IF-3 are released leaving the mature 70S translation initiation complex. In Alkalilimnicola ehrlichii (strain ATCC BAA-1101 / DSM 17681 / MLHE-1), this protein is Translation initiation factor IF-1.